Reading from the N-terminus, the 119-residue chain is NADH dehydrogenase [ubiquinone] 1 subunit C2 (119 aa).

A helical membrane pass occupies residues 56-75; that stretch reads GLHRQLLYITAFFFAGYYLV.

It belongs to the complex I NDUFC2 subunit family. In terms of assembly, complex I is composed of 45 different subunits. Interacts with TMEM242.

It is found in the mitochondrion inner membrane. Functionally, accessory subunit of the mitochondrial membrane respiratory chain NADH dehydrogenase (Complex I), that is believed not to be involved in catalysis but required for the complex assembly. Complex I functions in the transfer of electrons from NADH to the respiratory chain. The immediate electron acceptor for the enzyme is believed to be ubiquinone. The protein is NADH dehydrogenase [ubiquinone] 1 subunit C2 of Pan troglodytes (Chimpanzee).